Reading from the N-terminus, the 275-residue chain is Small ribosomal subunit protein uS2 (275 aa).

The tract at residues Ala-226 to Glu-275 is disordered. The span at Ala-264–Glu-275 shows a compositional bias: low complexity.

Belongs to the universal ribosomal protein uS2 family.

The polypeptide is Small ribosomal subunit protein uS2 (Xanthomonas campestris pv. campestris (strain 8004)).